The following is a 96-amino-acid chain: Transcription and mRNA export factor SUS1 (96 aa).

This sequence belongs to the ENY2 family. As to quaternary structure, component of the nuclear pore complex (NPC)-associated TREX-2 complex (transcription and export complex 2), composed of at least SUS1, SAC3, THP1, SEM1, and CDC31. TREX-2 contains 2 SUS1 chains. The TREX-2 complex interacts with the nucleoporin NUP1. Component of the 1.8 MDa SAGA transcription coactivator-HAT complex. SAGA is built of 5 distinct domains with specialized functions. Within the SAGA complex, SUS1, SGF11, SGF73 and UBP8 form an additional subcomplex of SAGA called the DUB module (deubiquitination module). Interacts directly with THP1, SAC3, SGF11, and with the RNA polymerase II.

The protein resides in the nucleus. It localises to the nucleoplasm. Its subcellular location is the cytoplasm. It is found in the P-body. Functionally, involved in mRNA export coupled transcription activation by association with both the TREX-2 and the SAGA complexes. At the promoters, SAGA is required for recruitment of the basal transcription machinery. It influences RNA polymerase II transcriptional activity through different activities such as TBP interaction and promoter selectivity, interaction with transcription activators, and chromatin modification through histone acetylation and deubiquitination. Within the SAGA complex, participates in a subcomplex required for deubiquitination of H2B and for the maintenance of steady-state H3 methylation levels. The TREX-2 complex functions in docking export-competent ribonucleoprotein particles (mRNPs) to the nuclear entrance of the nuclear pore complex (nuclear basket). TREX-2 participates in mRNA export and accurate chromatin positioning in the nucleus by tethering genes to the nuclear periphery. May also be involved in cytoplasmic mRNA decay by interaction with components of P-bodies. The sequence is that of Transcription and mRNA export factor SUS1 from Kluyveromyces lactis (strain ATCC 8585 / CBS 2359 / DSM 70799 / NBRC 1267 / NRRL Y-1140 / WM37) (Yeast).